The chain runs to 214 residues: Phosphatidylcholine transfer protein (214 aa).

Residue methionine 1 is modified to N-acetylmethionine. The START domain maps to 1-212; the sequence is MAGPAAHFSD…MVKACQNYHK (212 aa). A 1,2-diacyl-sn-glycero-3-phosphocholine-binding residues include tyrosine 72 and arginine 78. Serine 139 is modified (phosphoserine). Glutamine 157 is a binding site for a 1,2-diacyl-sn-glycero-3-phosphocholine.

Interacts with ACOT13/THEM2.

It is found in the cytoplasm. In terms of biological role, lipid transfer protein that promotes intermembrane transfer of phosphatidylcholines but no other phospholipids. Binds a single lipid molecule. May play a role in hepatocellular selection and transport of phosphatidylcholines during bile formation. The sequence is that of Phosphatidylcholine transfer protein (Pctp) from Rattus norvegicus (Rat).